Reading from the N-terminus, the 428-residue chain is C4-dicarboxylate transport protein (428 aa).

8 helical membrane passes run 8–28 (VLYV…HYYP), 44–64 (LIKM…IAGM), 78–98 (LLYF…ATHI), 148–168 (GEIL…AHLG), 184–204 (VLFG…FGAM), 222–242 (LIGT…GAIA), 307–327 (IYMT…LTWM), and 355–375 (AATL…ILGI).

It belongs to the dicarboxylate/amino acid:cation symporter (DAACS) (TC 2.A.23) family.

The protein localises to the cell inner membrane. Responsible for the transport of dicarboxylates such as succinate, fumarate, and malate from the periplasm across the membrane. This chain is C4-dicarboxylate transport protein, found in Burkholderia pseudomallei (strain 1106a).